The following is a 382-amino-acid chain: Chorismate synthase (382 aa).

NADP(+) is bound by residues Arg-39 and Arg-45. Residues 128–130 (RAS), 246–247 (QA), Ala-290, 305–309 (KPIAT), and Arg-331 contribute to the FMN site.

Belongs to the chorismate synthase family. As to quaternary structure, homotetramer. Requires FMNH2 as cofactor.

The catalysed reaction is 5-O-(1-carboxyvinyl)-3-phosphoshikimate = chorismate + phosphate. It functions in the pathway metabolic intermediate biosynthesis; chorismate biosynthesis; chorismate from D-erythrose 4-phosphate and phosphoenolpyruvate: step 7/7. Catalyzes the anti-1,4-elimination of the C-3 phosphate and the C-6 proR hydrogen from 5-enolpyruvylshikimate-3-phosphate (EPSP) to yield chorismate, which is the branch point compound that serves as the starting substrate for the three terminal pathways of aromatic amino acid biosynthesis. This reaction introduces a second double bond into the aromatic ring system. This chain is Chorismate synthase, found in Deinococcus geothermalis (strain DSM 11300 / CIP 105573 / AG-3a).